We begin with the raw amino-acid sequence, 327 residues long: Complex I intermediate-associated protein 30, mitochondrial (327 aa).

The N-terminal 24 residues, 1 to 24 (MALVHKLLRGTYFLRKFSKPTSAL), are a transit peptide targeting the mitochondrion. The tract at residues 42-63 (PVASPGKASSQRKTEGDLQGDH) is disordered. The span at 53–63 (RKTEGDLQGDH) shows a compositional bias: basic and acidic residues. The residue at position 318 (Ser-318) is a Phosphoserine.

The protein belongs to the CIA30 family. In terms of assembly, part of the mitochondrial complex I assembly/MCIA complex that comprises at least the core subunits TMEM126B, NDUFAF1, ECSIT and ACAD9 and complement subunits such as COA1 and TMEM186. Interacts with ECSIT. Interacts with ACAD9. At early stages of complex I assembly, it is found in intermediate subcomplexes that contain different subunits including NDUFB6, NDUFA6, NDUFA9, NDUFS3, NDUFS7, ND1, ND2 and ND3. Interacts with TMEM70 and TMEM242. In terms of tissue distribution, ubiquitous.

It is found in the mitochondrion. The protein resides in the mitochondrion matrix. Functionally, as part of the MCIA complex, involved in the assembly of the mitochondrial complex I. The sequence is that of Complex I intermediate-associated protein 30, mitochondrial from Homo sapiens (Human).